Consider the following 356-residue polypeptide: MDAGVTESGLNVTLTIRLLMHGKEVGSIIGKKGESVKRIREESGARINISEGNCPERIITLTGPTNAIFKAFAMIIDKLEEDINSSMTNSTAASRPPVTLRLVVPATQCGSLIGKGGCKIKEIRESTGAQVQVAGDMLPNSTERAITIAGVPQSVTECVKQICLVMLETLSQSPQGRVMTIPYQPMPASSPVICAGGQDRCSDAAGYPHATHDLEGPPLDAYSIQGQHTISPLDLAKLNQVARQQSHFAMMHGGTGFAGIDSSSPEVKGYWASLDASTQTTHELTIPNNLIGCIIGRQGANINEIRQMSGAQIKIANPVEGSSGRQVTITGSAASISLAQYLINARLSSEKGMGCS.

Met-1 carries the post-translational modification N-acetylmethionine. KH domains are found at residues 13 to 75 (TLTI…FAMI) and 97 to 162 (PVTL…VKQI). Lys-115 participates in a covalent cross-link: Glycyl lysine isopeptide (Lys-Gly) (interchain with G-Cter in SUMO2). A phosphoserine mark is found at Ser-173, Ser-189, Ser-190, Ser-246, Ser-264, and Ser-273. The KH 3 domain occupies 279–343 (QTTHELTIPN…ASISLAQYLI (65 aa)).

Phosphorylated; lowers poly(rC)-binding activity.

It is found in the nucleus. It localises to the cytoplasm. In terms of biological role, single-stranded nucleic acid binding protein that binds preferentially to oligo dC. Together with PCBP2, required for erythropoiesis, possibly by regulating mRNA splicing. The polypeptide is Poly(rC)-binding protein 1 (PCBP1) (Bos taurus (Bovine)).